Reading from the N-terminus, the 860-residue chain is JmjC domain-containing histone demethylation protein 1 (860 aa).

3 disordered regions span residues 1–45, 117–212, and 408–440; these read MSEQ…EEGK, STSP…PKRK, and DVKE…GGEI. The segment at 23 to 116 adopts a PHD-type zinc-finger fold; it reads PEPCPLCRET…KWYCAPCLAR (94 aa). 2 stretches are compositionally biased toward basic and acidic residues: residues 183 to 192 and 408 to 433; these read IDMKSEREQQ and DVKE…HLTE. Residues 416-579 enclose the JmjC domain; sequence NDSREGSEIR…TQLRLRQIEI (164 aa). T471 provides a ligand contact to substrate. 2 residues coordinate Fe cation: H474 and D476. K491 provides a ligand contact to substrate. H547 is a Fe cation binding site. 2 disordered regions span residues 744 to 795 and 837 to 860; these read HPPA…ANEN and GPKL…DIDH. Positions 750–763 are enriched in polar residues; the sequence is ENRQSPQIETTTVQ. Residues 767-795 show a composition bias toward low complexity; that stretch reads PSTSSSDAISGSGPGASPGASANGGANEN.

The protein belongs to the JHDM1 histone demethylase family. It depends on Fe(2+) as a cofactor.

The protein localises to the nucleus. The enzyme catalyses N(6),N(6)-dimethyl-L-lysyl(36)-[histone H3] + 2 2-oxoglutarate + 2 O2 = L-lysyl(36)-[histone H3] + 2 formaldehyde + 2 succinate + 2 CO2. Its function is as follows. Histone demethylase that specifically demethylates 'Lys-36' of histone H3, thereby playing a central role in histone code. This Cryptococcus neoformans var. neoformans serotype D (strain JEC21 / ATCC MYA-565) (Filobasidiella neoformans) protein is JmjC domain-containing histone demethylation protein 1 (JHD1).